Consider the following 295-residue polypeptide: tRNA-cytidine(32) 2-sulfurtransferase (295 aa).

Residues 63 to 68 (SGGKDS) carry the PP-loop motif motif. Cys-138, Cys-141, and Cys-229 together coordinate [4Fe-4S] cluster.

This sequence belongs to the TtcA family. In terms of assembly, homodimer. The cofactor is Mg(2+). It depends on [4Fe-4S] cluster as a cofactor.

It localises to the cytoplasm. It carries out the reaction cytidine(32) in tRNA + S-sulfanyl-L-cysteinyl-[cysteine desulfurase] + AH2 + ATP = 2-thiocytidine(32) in tRNA + L-cysteinyl-[cysteine desulfurase] + A + AMP + diphosphate + H(+). Its pathway is tRNA modification. Its function is as follows. Catalyzes the ATP-dependent 2-thiolation of cytidine in position 32 of tRNA, to form 2-thiocytidine (s(2)C32). The sulfur atoms are provided by the cysteine/cysteine desulfurase (IscS) system. The sequence is that of tRNA-cytidine(32) 2-sulfurtransferase from Mesorhizobium japonicum (strain LMG 29417 / CECT 9101 / MAFF 303099) (Mesorhizobium loti (strain MAFF 303099)).